We begin with the raw amino-acid sequence, 299 residues long: Protoheme IX farnesyltransferase (299 aa).

9 consecutive transmembrane segments (helical) span residues 25 to 45, 47 to 67, 95 to 115, 119 to 139, 147 to 167, 173 to 193, 218 to 238, 243 to 263, and 279 to 299; these read VVVL…RAGV, WTVL…AAAV, LAAL…LLTF, LAAW…TGFL, IVIG…AVSG, PLLL…ALAI, LHIL…YAIH, LYLL…WALY, and IRYL…PLTL.

It belongs to the UbiA prenyltransferase family. Protoheme IX farnesyltransferase subfamily.

The protein localises to the cell inner membrane. It carries out the reaction heme b + (2E,6E)-farnesyl diphosphate + H2O = Fe(II)-heme o + diphosphate. It functions in the pathway porphyrin-containing compound metabolism; heme O biosynthesis; heme O from protoheme: step 1/1. Its function is as follows. Converts heme B (protoheme IX) to heme O by substitution of the vinyl group on carbon 2 of heme B porphyrin ring with a hydroxyethyl farnesyl side group. This is Protoheme IX farnesyltransferase from Azotobacter vinelandii (strain DJ / ATCC BAA-1303).